The primary structure comprises 706 residues: Ribosomal RNA large subunit methyltransferase K/L (706 aa).

A THUMP domain is found at 43 to 154; that stretch reads LMYQSLLWSR…RDMASVALDL (112 aa).

This sequence belongs to the methyltransferase superfamily. RlmKL family.

The protein localises to the cytoplasm. It catalyses the reaction guanosine(2445) in 23S rRNA + S-adenosyl-L-methionine = N(2)-methylguanosine(2445) in 23S rRNA + S-adenosyl-L-homocysteine + H(+). The enzyme catalyses guanosine(2069) in 23S rRNA + S-adenosyl-L-methionine = N(2)-methylguanosine(2069) in 23S rRNA + S-adenosyl-L-homocysteine + H(+). In terms of biological role, specifically methylates the guanine in position 2445 (m2G2445) and the guanine in position 2069 (m7G2069) of 23S rRNA. The protein is Ribosomal RNA large subunit methyltransferase K/L of Yersinia pseudotuberculosis serotype O:1b (strain IP 31758).